Reading from the N-terminus, the 561-residue chain is Putative transport protein YbjL (561 aa).

A run of 5 helical transmembrane segments spans residues Leu-8 to Gly-28, Leu-32 to Gln-52, Phe-66 to Phe-86, Met-94 to Phe-114, and Asn-158 to Ala-178. RCK C-terminal domains follow at residues Arg-200 to Asn-288 and Val-292 to Phe-373. Helical transmembrane passes span Leu-383–Phe-403, Phe-406–Met-426, Val-451–Ile-471, Met-475–Ala-495, and Ala-540–Leu-560.

This sequence belongs to the AAE transporter (TC 2.A.81) family. YbjL subfamily.

Its subcellular location is the cell membrane. The sequence is that of Putative transport protein YbjL from Shigella boydii serotype 4 (strain Sb227).